Here is a 641-residue protein sequence, read N- to C-terminus: 1-deoxy-D-xylulose-5-phosphate synthase (641 aa).

Residues His-78 and 119–121 (AHS) each bind thiamine diphosphate. Asp-150 contacts Mg(2+). Thiamine diphosphate is bound by residues 151–152 (GA), Asn-179, Tyr-288, and Glu-370. Residue Asn-179 coordinates Mg(2+).

This sequence belongs to the transketolase family. DXPS subfamily. As to quaternary structure, homodimer. Mg(2+) serves as cofactor. Requires thiamine diphosphate as cofactor.

It carries out the reaction D-glyceraldehyde 3-phosphate + pyruvate + H(+) = 1-deoxy-D-xylulose 5-phosphate + CO2. Its pathway is metabolic intermediate biosynthesis; 1-deoxy-D-xylulose 5-phosphate biosynthesis; 1-deoxy-D-xylulose 5-phosphate from D-glyceraldehyde 3-phosphate and pyruvate: step 1/1. Catalyzes the acyloin condensation reaction between C atoms 2 and 3 of pyruvate and glyceraldehyde 3-phosphate to yield 1-deoxy-D-xylulose-5-phosphate (DXP). The sequence is that of 1-deoxy-D-xylulose-5-phosphate synthase from Azorhizobium caulinodans (strain ATCC 43989 / DSM 5975 / JCM 20966 / LMG 6465 / NBRC 14845 / NCIMB 13405 / ORS 571).